The following is a 450-amino-acid chain: Exodeoxyribonuclease 7 large subunit (450 aa).

The protein belongs to the XseA family. Heterooligomer composed of large and small subunits.

It localises to the cytoplasm. The enzyme catalyses Exonucleolytic cleavage in either 5'- to 3'- or 3'- to 5'-direction to yield nucleoside 5'-phosphates.. Bidirectionally degrades single-stranded DNA into large acid-insoluble oligonucleotides, which are then degraded further into small acid-soluble oligonucleotides. This is Exodeoxyribonuclease 7 large subunit from Listeria monocytogenes serovar 1/2a (strain ATCC BAA-679 / EGD-e).